Reading from the N-terminus, the 298-residue chain is Probable endonuclease 4 (298 aa).

9 residues coordinate Zn(2+): histidine 69, histidine 111, glutamate 146, aspartate 180, histidine 183, histidine 215, aspartate 228, histidine 230, and glutamate 260.

Belongs to the AP endonuclease 2 family. Zn(2+) is required as a cofactor.

The enzyme catalyses Endonucleolytic cleavage to 5'-phosphooligonucleotide end-products.. Endonuclease IV plays a role in DNA repair. It cleaves phosphodiester bonds at apurinic or apyrimidinic (AP) sites, generating a 3'-hydroxyl group and a 5'-terminal sugar phosphate. The protein is Probable endonuclease 4 of Bacillus cereus (strain G9842).